A 290-amino-acid chain; its full sequence is UPF0761 membrane protein ASA_4118 (290 aa).

Helical transmembrane passes span 48-68 (LLSL…FPVF), 104-124 (NTTA…ISAI), 144-164 (FAMY…SIAI), 182-202 (IGYL…FLLV), 216-236 (AFIG…GFAI), and 250-270 (ALAT…VVLL).

It belongs to the UPF0761 family.

It is found in the cell inner membrane. The sequence is that of UPF0761 membrane protein ASA_4118 from Aeromonas salmonicida (strain A449).